We begin with the raw amino-acid sequence, 558 residues long: Putative transposase for insertion sequence IS1162 (558 aa).

Residues 11 to 93 (IKECLRLKFE…PDLITIHREL (83 aa)) form the HTH IS408-type domain. The H-T-H motif DNA-binding region spans 23–44 (LSHEKIARALQLSKGVVSKYVT). The Integrase catalytic domain occupies 139-336 (QQHRAGEKLF…HPYEVVTFKR (198 aa)). Residues 486-558 (QGLDQQPLPK…AAGQPQPELR (73 aa)) are disordered.

This sequence belongs to the transposase IS21/IS408/IS1162 family.

In terms of biological role, required for the transposition of the insertion element. The sequence is that of Putative transposase for insertion sequence IS1162 from Pseudomonas fluorescens.